The chain runs to 432 residues: Adenylosuccinate synthetase (432 aa).

Residues 13 to 19 (GDEGKGK) and 41 to 43 (GHT) contribute to the GTP site. Asp14 (proton acceptor) is an active-site residue. Mg(2+)-binding residues include Asp14 and Gly41. IMP is bound by residues 14-17 (DEGK), 39-42 (NAGH), Thr130, Arg144, Gln225, Thr240, and Arg304. His42 serves as the catalytic Proton donor. 300-306 (ATTGRRR) contributes to the substrate binding site. Residues Arg306, 332 to 334 (KLD), and 415 to 417 (STG) contribute to the GTP site.

The protein belongs to the adenylosuccinate synthetase family. In terms of assembly, homodimer. Mg(2+) is required as a cofactor.

The protein resides in the cytoplasm. The enzyme catalyses IMP + L-aspartate + GTP = N(6)-(1,2-dicarboxyethyl)-AMP + GDP + phosphate + 2 H(+). It functions in the pathway purine metabolism; AMP biosynthesis via de novo pathway; AMP from IMP: step 1/2. In terms of biological role, plays an important role in the de novo pathway of purine nucleotide biosynthesis. Catalyzes the first committed step in the biosynthesis of AMP from IMP. The chain is Adenylosuccinate synthetase from Escherichia coli (strain K12).